The following is a 490-amino-acid chain: Betaine aldehyde dehydrogenase (490 aa).

K(+)-binding residues include Ile27 and Asp93. 150–152 (GAW) contacts NAD(+). Catalysis depends on Lys162, which acts as the Charge relay system. An NAD(+)-binding site is contributed by 176 to 179 (KPSE). Position 180 (Val180) interacts with K(+). 230–233 (GTDT) is a binding site for NAD(+). Leu246 serves as a coordination point for K(+). Glu252 acts as the Proton acceptor in catalysis. Gly254, Cys286, and Glu387 together coordinate NAD(+). Cys286 (nucleophile) is an active-site residue. Cys286 bears the Cysteine sulfenic acid (-SOH) mark. K(+) is bound by residues Lys457 and Gly460. Glu464 acts as the Charge relay system in catalysis.

This sequence belongs to the aldehyde dehydrogenase family. Dimer of dimers. K(+) is required as a cofactor.

The enzyme catalyses betaine aldehyde + NAD(+) + H2O = glycine betaine + NADH + 2 H(+). It functions in the pathway amine and polyamine biosynthesis; betaine biosynthesis via choline pathway; betaine from betaine aldehyde: step 1/1. Functionally, involved in the biosynthesis of the osmoprotectant glycine betaine. Catalyzes the irreversible oxidation of betaine aldehyde to the corresponding acid. This Pseudomonas syringae pv. syringae (strain B728a) protein is Betaine aldehyde dehydrogenase.